Reading from the N-terminus, the 338-residue chain is Fructose-1,6-bisphosphatase class 1 (338 aa).

Mg(2+) contacts are provided by E94, D116, L118, and D119. Residues 119-122 (DGSS), N210, and K276 each bind substrate. Mg(2+) is bound at residue E282.

It belongs to the FBPase class 1 family. As to quaternary structure, homotetramer. It depends on Mg(2+) as a cofactor.

Its subcellular location is the cytoplasm. It carries out the reaction beta-D-fructose 1,6-bisphosphate + H2O = beta-D-fructose 6-phosphate + phosphate. The protein operates within carbohydrate biosynthesis; gluconeogenesis. The polypeptide is Fructose-1,6-bisphosphatase class 1 (Paraburkholderia phytofirmans (strain DSM 17436 / LMG 22146 / PsJN) (Burkholderia phytofirmans)).